The sequence spans 146 residues: Large ribosomal subunit protein bL19 (146 aa).

The protein belongs to the bacterial ribosomal protein bL19 family.

Its function is as follows. This protein is located at the 30S-50S ribosomal subunit interface and may play a role in the structure and function of the aminoacyl-tRNA binding site. The polypeptide is Large ribosomal subunit protein bL19 (Bartonella henselae (strain ATCC 49882 / DSM 28221 / CCUG 30454 / Houston 1) (Rochalimaea henselae)).